The primary structure comprises 2372 residues: MAGDIILEDEEENILYDLLVNTEWPPETDTQLRGLKEHNSSLVAKAVTGPFRFFLHYLCPSSSTLPPGLVRLATKQVNWQLVLASNGKLLAVVQDQCVEIRSARDDFGSIIGKCQVPKDPNPHWRRVAWSHDCALLAYADSTGTVRVFDLMGSELFIIPPAMSFPGDFSYAAAGLMFLEYTGSAQWSAELLVITYSGQLKSYLVSVGTNQGFQENHTFSFSAHYSNGITTAIYHPGHRLLLVGGCESGDSDVSRASQCGITAWRVLSGLPHYKQVTSYEDDISSSQRRGFFKMPSFRLFSRHNGEQDGVFRMSLSPDGTILAVIHFSGSLSLWDIPSFKLRGSWKQEEQPGFDEINPEWKTSLEKRKKIKDKEQYQSLLDVSWWSETALILARCSGALTVSSVRTLKNLLGKSCEWFEPSPRVTSAHDGGFLSLECEVKLAHKRSRLESSVKGEEDDGDDDSDSDEEASAKARYFGYVKQGLYYVTEMERFAPPRKRPRTVIKNYRLVSLRSTTPEELYQRKIDNEEYGEALSLAQAYGLDSDLVYQRQWRKSTVSIASIQDYLSKIKKRSWVLHECVERVPENVDAAKELLQYGLKGTDLEALIAIGAREDQGRFILSGDLDMDDAPYEDFLSMEEELEQRKERESKKRQELLKKVDFSKLTLEQKELCRSRLKLLCYLDRLATYEEILGGPHAAEQRFDGEFFKKFRNQNIVLSARTYARESNVQALDILFTYHGAELLQHRLAILCNFPETTSPHEYSDLLPKAGVDKEGNLVLIPWEESRHRDLDWCEVLECREVVEPKPMDDCQFLYEEQPELERFRSADPFITLLTEWYLTRAQDIESHSRQVDCSLSLVRLGKEQNIPGLERLCDDLVTMETLVYETSCDLSVTLKELQQLRDIDKLRLLMKNSSEDRYVRNCFQWMVPFLHRCEGQRVGSASSLLREYLVTLAKDDLTLPLKLFQHSKPDCHPKIIGDSDQLMTVALKCIYSCERDDQLALCYDVLECLPQRGYGPETDTTKALHDQVDTLEKHLSVAEVLEKHGLQKPISFVRNSQNSKEEAHQLMVRLTRHTGRKNPPVSETVWRSLLQDLLDMQQNVYTCLEPETCHQVFVESLLCSSREENVRLAGQLMHCSGVSEDTPVSVSLRGKAHARVSYSRSVELVLAAAREYFNSSATLSDPCMSLARSCLQLITDCPPLVQEELDLITALSRLEQFGVKILPLQVRLRTDRLSLIKECISQCPTAYRQSLLLLSLARLLRVAGDDEAKRKGQVLTLLAEQALLCQDFKASYIHCQELMAAGYSEGWDVCAQLGQCETFTQLSGRQELMAFSLTHCPPSRIQTLLAASSSLQTQVLYQAVNYKIDPSQARRTGSELFEIKVLDDENVTEIPTKLYSVGAAVPGSINPTDLLHRTTARTIEVLTNTTMSTKAVLTTVIDSHWWRESLSLLRPLHGPAVDRNRAGAANQNADLEKQGCSPFYEELFDDPYVNTSEDVYSSYHYNPQEDFAEVLLRTGKLAETNSEGQNLFPATEVLLQLASDAFPKDMTLALAYLLALPQVLDANTCFEKQPPSALSLHLAAYYYSLQIYSRLAPCFKDKCSPLYRADPRALIRLVTKHVTDHAGCDWPDEDLEALIGQLRLYSERLTDFTQAQVLQGLGRGVDVQRFSSDNQYKKETILGLAETLDENVYSISRSLAHRYSIPLWEVHMTHLEFLFTDSGLSTKDIEGRTEALGLFETLKTDPESFYMHMTKYVYPSIAGTDQLRLLFYFTLLENCGCANYFSQTAMKPDTHLKLLKKLKAVAVGLDYKKMTEENSDPLKALEPILTSQNVLSISKLASRIPQKGGEALTSSAVHSTWLHKLFWEGDQHVLKKAPQTDQDFLHAYDTCAKYFDRLLPVDFVNFLDAITFSPEAANKLSVGTRLEITKRAQKALKSISDKTKKKGNDDRSENSAFNFDTALTHVQQSLTHLETLSHSFLLSLKTSQEELLQKYSRIYDLSRSEQSKVHHLAVTMATDGQPLERIEQLLSVAVGTSDLSPKSVVQDAVERIISALSGDKDVLKDYADPLKVLEGIVAVVHTNVQSGGNIVTSEDMLEWLRPFCGDDTKPVRPRIEVLQILEHSFNLSDQDIHLLVYFRSQAILKACWPNRKCEMEDVENEKKRNSLFLELLESSSKWEEFQHLMLLLQAWPPVTDKSRLETDQNPWVCLTSTLLVHSSSVSQINIGNEVLSMCRSLYLTKHKLNPQGIGNISSLLLNAGLKLPALKLMTESKDEHLLKLTQDQIRNITEVTEEVCDTELLSLLLNAGMLISCVDTAVYPSLVSHMLAQGDWDVEKAAYDLQQAGHSAQAGSLLLSYRGSHPGQFTFNSALAVIRKWL.

WD repeat units follow at residues 119 to 158 (DPNPHWRRVAWSHDCALLAYADSTGTVRVFDLMGSELFII) and 304 to 343 (GEQDGVFRMSLSPDGTILAVIHFSGSLSLWDIPSFKLRGS). The interval 447 to 468 (LESSVKGEEDDGDDDSDSDEEA) is disordered. Positions 454-467 (EEDDGDDDSDSDEE) are enriched in acidic residues. Residues 629-668 (YEDFLSMEEELEQRKERESKKRQELLKKVDFSKLTLEQKE) are a coiled coil.

It is found in the endoplasmic reticulum. Its function is as follows. Involved in Golgi-to-endoplasmic reticulum (ER) retrograde transport; the function is proposed to depend on its association in the NRZ complex which is believed to play a role in SNARE assembly at the ER. Required for normal embryonic development. May play a role in the nonsense-mediated decay pathway of mRNAs containing premature stop codons. The chain is NBAS subunit of NRZ tethering complex from Danio rerio (Zebrafish).